Reading from the N-terminus, the 511-residue chain is Alpha-amylase 1A (511 aa).

Residues 1–15 (MKLFWLLFTIGFCWA) form the signal peptide. Glutamine 16 is modified (pyrrolidone carboxylic acid). Intrachain disulfides connect cysteine 43–cysteine 101, cysteine 85–cysteine 130, and cysteine 156–cysteine 175. The Ca(2+) site is built by asparagine 115, arginine 173, and aspartate 182. Arginine 210 contributes to the chloride binding site. The active-site Nucleophile is the aspartate 212. Residue histidine 216 coordinates Ca(2+). The active-site Proton donor is glutamate 248. Chloride contacts are provided by asparagine 313 and arginine 352. Asparagine 365 carries the post-translational modification Deamidated asparagine; partial. The cysteines at positions 393 and 399 are disulfide-linked. Deamidated asparagine; partial; alternate is present on asparagine 427. A glycan (N-linked (GlcNAc...) asparagine) is linked at asparagine 427. Residues cysteine 465 and cysteine 477 are joined by a disulfide bond. The residue at position 474 (asparagine 474) is a Deamidated asparagine; partial. Residue asparagine 476 is glycosylated (N-linked (GlcNAc...) asparagine).

This sequence belongs to the glycosyl hydrolase 13 family. As to quaternary structure, monomer. Requires Ca(2+) as cofactor. It depends on chloride as a cofactor.

It localises to the secreted. It carries out the reaction Endohydrolysis of (1-&gt;4)-alpha-D-glucosidic linkages in polysaccharides containing three or more (1-&gt;4)-alpha-linked D-glucose units.. Calcium-binding enzyme that initiates starch digestion in the oral cavity. Catalyzes the hydrolysis of internal (1-&gt;4)-alpha-D-glucosidic bonds, yielding a mixture of maltose, isomaltose, small amounts of glucose as well as small linear and branched oligosaccharides called dextrins. The polypeptide is Alpha-amylase 1A (Homo sapiens (Human)).